Consider the following 370-residue polypeptide: sn-glycerol-3-phosphate import ATP-binding protein UgpC (370 aa).

Residues 4–235 (LRLDGIRKRY…PATRFVASFL (232 aa)) enclose the ABC transporter domain. 37–44 (GPSGCGKS) lines the ATP pocket.

It belongs to the ABC transporter superfamily. sn-glycerol-3-phosphate importer (TC 3.A.1.1.3) family. The complex is composed of two ATP-binding proteins (UgpC), two transmembrane proteins (UgpA and UgpE) and a solute-binding protein (UgpB).

The protein resides in the cell inner membrane. The catalysed reaction is sn-glycerol 3-phosphate(out) + ATP + H2O = sn-glycerol 3-phosphate(in) + ADP + phosphate + H(+). Part of the ABC transporter complex UgpBAEC involved in sn-glycerol-3-phosphate (G3P) import. Responsible for energy coupling to the transport system. This Chromohalobacter salexigens (strain ATCC BAA-138 / DSM 3043 / CIP 106854 / NCIMB 13768 / 1H11) protein is sn-glycerol-3-phosphate import ATP-binding protein UgpC.